Consider the following 564-residue polypeptide: Diacylglycerol kinase epsilon (564 aa).

The chain crosses the membrane as a helical span at residues 20–40 (LVLWTLCSVLLPVFITLWCSL). 2 Phorbol-ester/DAG-type zinc fingers span residues 57–106 (KHCW…RFPC) and 121–174 (PHHW…SEKC). In terms of domain architecture, DAGKc spans 212 to 353 (KQWTPLIILA…LDRWKVQVTN (142 aa)).

Belongs to the eukaryotic diacylglycerol kinase family. Highly expressed in brain and heart. In brain, highly expressed in Purkinje cells of the cerebellum, pyramidal cells of the hippocampus, mitral cells of the olfactory bulb, and neurons of the substantia nigra. Lower expression in neurons of the thalamus, superior olive, and lateral reticular nucleus is also detected. Expressed in platelets.

It is found in the membrane. Its subcellular location is the cytoplasm. The catalysed reaction is a 1,2-diacyl-sn-glycerol + ATP = a 1,2-diacyl-sn-glycero-3-phosphate + ADP + H(+). It carries out the reaction 1-hexadecanoyl-2-(5Z,8Z,11Z,14Z-eicosatetraenoyl)-sn-glycerol + ATP = 1-hexadecanoyl-2-(5Z,8Z,11Z,14Z-eicosatetraenoyl)-sn-glycero-3-phosphate + ADP + H(+). It catalyses the reaction 1-octadecanoyl-2-(5Z,8Z,11Z,14Z-eicosatetraenoyl)-sn-glycerol + ATP = 1-octadecanoyl-2-(5Z,8Z,11Z,14Z-eicosatetraenoyl)-sn-glycero-3-phosphate + ADP + H(+). The enzyme catalyses 1-eicosanoyl-2-(5Z,8Z,11Z,14Z)-eicosatetraenoyl-sn-glycerol + ATP = 1-eicosanoyl-2-(5Z,8Z,11Z,14Z)-eicosatetraenoyl-sn-glycero-3-phosphate + ADP + H(+). The catalysed reaction is 1,2-di-(5Z,8Z,11Z,14Z)-eicosatetraenoyl-sn-glycerol + ATP = 1,2-di-(5Z,8Z,11Z,14Z)-eicosatetraenoyl-sn-glycero-3-phosphate + ADP + H(+). It carries out the reaction 1-octadecanoyl-2-(9Z,12Z)-octadecadienoyl-sn-glycerol + ATP = 1-octadecanoyl-2-(9Z,12Z-octadecadienoyl)-sn-glycero-3-phosphate + ADP + H(+). It catalyses the reaction 1,2-di-(9Z,12Z-octadecadienoyl)-sn-glycerol + ATP = 1,2-di-(9Z,12Z-octadecadienoyl)-sn-glycero-3-phosphate + ADP + H(+). The enzyme catalyses 1,2-di-(9Z-octadecenoyl)-sn-glycerol + ATP = 1,2-di-(9Z-octadecenoyl)-sn-glycero-3-phosphate + ADP + H(+). Its pathway is lipid metabolism; glycerolipid metabolism. In terms of biological role, membrane-bound diacylglycerol kinase that converts diacylglycerol/DAG into phosphatidic acid/phosphatidate/PA and regulates the respective levels of these two bioactive lipids. Thereby, acts as a central switch between the signaling pathways activated by these second messengers with different cellular targets and opposite effects in numerous biological processes. Also plays an important role in the biosynthesis of complex lipids. Displays specificity for diacylglycerol substrates with an arachidonoyl acyl chain at the sn-2 position, with the highest activity toward 1-octadecanoyl-2-(5Z,8Z,11Z,14Z-eicosatetraenoyl)-sn-glycerol the main diacylglycerol intermediate within the phosphatidylinositol turnover cycle. Can also phosphorylate diacylglycerol substrates with a linoleoyl acyl chain at the sn-2 position but much less efficiently. The protein is Diacylglycerol kinase epsilon (Dgke) of Mus musculus (Mouse).